A 173-amino-acid polypeptide reads, in one-letter code: Bifunctional protein PyrR (173 aa).

The PRPP-binding motif lies at 93 to 105; the sequence is VILVDDVLYTGRT.

Belongs to the purine/pyrimidine phosphoribosyltransferase family. PyrR subfamily. As to quaternary structure, homodimer and homohexamer; in equilibrium.

The enzyme catalyses UMP + diphosphate = 5-phospho-alpha-D-ribose 1-diphosphate + uracil. Its function is as follows. Regulates transcriptional attenuation of the pyrimidine nucleotide (pyr) operon by binding in a uridine-dependent manner to specific sites on pyr mRNA. This disrupts an antiterminator hairpin in the RNA and favors formation of a downstream transcription terminator, leading to a reduced expression of downstream genes. In terms of biological role, also displays a weak uracil phosphoribosyltransferase activity which is not physiologically significant. The chain is Bifunctional protein PyrR from Streptococcus suis (strain 05ZYH33).